The sequence spans 966 residues: Probable LIM domain-containing serine/threonine-protein kinase DDB_G0286997 (966 aa).

LIM zinc-binding domains follow at residues 3–62 (SRCG…LNAP) and 63–120 (KCFK…KPPP). Disordered regions lie at residues 208–291 (YSLS…PTED) and 331–588 (PLNQ…EQQV). The span at 211-231 (SSPSSSSSSSSSSSSSSSSPP) shows a compositional bias: low complexity. A compositionally biased stretch (polar residues) spans 232 to 269 (NTFNKSSDFLRNPLNNNVKSSSSSIGGNFVNKSQQQQQ). 2 stretches are compositionally biased toward low complexity: residues 270–284 (PIDS…ISPS) and 331–350 (PLNQ…SPNL). Residues 374-389 (TTTFSNPLLKTKNQSF) show a composition bias toward polar residues. Pro residues predominate over residues 419-430 (PLPPPPITPIPS). Residues 431 to 449 (PSSSSIIINNQQQQQQESQ) show a composition bias toward low complexity. Residues 490–511 (KPIVLPPPPLDMEQLPLPPPPL) show a composition bias toward pro residues. Residues 513-526 (SSQINQSLKSTQHN) are compositionally biased toward polar residues. Residues 543–560 (IQKQSIPTRKPQLPQSSN) show a composition bias toward low complexity. The span at 561 to 570 (PSPPSPPSPQ) shows a compositional bias: pro residues. The Protein kinase domain maps to 702-959 (VIFGDVIAAG…DTLKKISESL (258 aa)). ATP contacts are provided by residues 708 to 716 (IAAGASGKV) and lysine 729. Catalysis depends on aspartate 825, which acts as the Proton acceptor.

This sequence belongs to the protein kinase superfamily. TKL Ser/Thr protein kinase family.

It carries out the reaction L-seryl-[protein] + ATP = O-phospho-L-seryl-[protein] + ADP + H(+). The enzyme catalyses L-threonyl-[protein] + ATP = O-phospho-L-threonyl-[protein] + ADP + H(+). This Dictyostelium discoideum (Social amoeba) protein is Probable LIM domain-containing serine/threonine-protein kinase DDB_G0286997.